Consider the following 499-residue polypeptide: Type-1 glutamine synthetase 1 (499 aa).

The GS beta-grasp domain maps to 50–146 (PQLKFIRVCW…IFGEFFYLDN (97 aa)). Residues 158-499 (PRNSLQRAID…DQILKLLELF (342 aa)) form the GS catalytic domain.

Belongs to the glutamine synthetase family.

It catalyses the reaction L-glutamate + NH4(+) + ATP = L-glutamine + ADP + phosphate + H(+). This is Type-1 glutamine synthetase 1 (glnA1) from Dictyostelium discoideum (Social amoeba).